A 2434-amino-acid polypeptide reads, in one-letter code: ATP-binding cassette sub-family A member 2 (2434 aa).

An N-linked (GlcNAc...) asparagine glycan is attached at N14. 2 consecutive transmembrane segments (helical) span residues 22–42 (PWVLAFEIFIPLVLFFILLGL) and 54–74 (AFYTAAPLTSAGILPVMQSLC). Residues N89, N168, and N173 are each glycosylated (N-linked (GlcNAc...) asparagine). Residue Q271 is modified to N5-methylglutamine. N-linked (GlcNAc...) asparagine glycosylation is found at N305, N368, N379, N420, N432, N476, N484, N494, N530, N549, N590, N600, and N628. The segment covering 354 to 369 (RAPAPQAGSPSGPANS) has biased composition (low complexity). The interval 354–396 (RAPAPQAGSPSGPANSTGVGANTGPNTTVEEGTQSPVTPASPD) is disordered. The segment covering 370–396 (TGVGANTGPNTTVEEGTQSPVTPASPD) has biased composition (polar residues). Helical transmembrane passes span 699–719 (FLFVIEHMMPLCMVISWVYSV), 750–770 (VAWFITGFVQLSISVTALTAI), 782–802 (VLIIWLFLAVYAVATIMFCFL), 813–833 (ASACGGIIYFLSYVPYMYVAI), 857–877 (AFGLGSKYFALYEVAGVGIQW), and 893–913 (LLAVTMLMVDTVVYGVLTWYI). The ABC transporter 1 domain maps to 990–1221 (VCVDKLTKVY…YGDGYRLTLV (232 aa)). 1024–1031 (GHNGAGKT) contacts ATP. Residues 1225-1246 (AEPGTSQEPGMASSPSGRPQLS) are disordered. Positions 1228–1246 (GTSQEPGMASSPSGRPQLS) are enriched in polar residues. S1238 is modified (phosphoserine). N1247 carries an N-linked (GlcNAc...) asparagine glycan. A phosphoserine mark is found at S1327 and S1331. Residues 1461 to 1481 (ILLPAFFVCVAMTVALSVPEI) form a helical membrane-spanning segment. 3 N-linked (GlcNAc...) asparagine glycosylation sites follow: N1496, N1549, and N1557. The segment at 1587 to 1606 (NFVPPPPSPAPSDSPLSPDE) is disordered. The span at 1589-1598 (VPPPPSPAPS) shows a compositional bias: pro residues. N1613, N1678, and N1776 each carry an N-linked (GlcNAc...) asparagine glycan. Transmembrane regions (helical) follow at residues 1793–1813 (VVIAIFIIVAMSFVPASFVVF), 1842–1862 (VWDMLNYLVPATCCIIILFVF), 1873–1893 (FPAVLSLFLLYGWSITPIMYP), 1906–1926 (VFLIVINLFIGITATVATFLL), and 1992–2012 (GLVAMTVEGFVGFFLTIMCQY). Residues 2051 to 2286 (VKIENLTKVY…FGDGYMITVR (236 aa)) form the ABC transporter 2 domain. An N-linked (GlcNAc...) asparagine glycan is attached at N2055. An ATP-binding site is contributed by 2088 to 2095 (GVNGAGKT). T2411 carries the post-translational modification Phosphothreonine.

Belongs to the ABC transporter superfamily. ABCA family. In terms of processing, N-glycosylated. Post-translationally, methylated at Gln-271 by N6AMT1. In terms of tissue distribution, expressed at high levels in brain, at moderate levels in heart, kidney and lung, and at low levels in skeletal muscle, stomach, spleen, colon and pancreas. Not detected in the liver or small intestine. In brain, highly expressed in white matter and detected in oligodendrocytes. Expressed in cerebellum as well as the anterior commissure. Expressed mainly in the white matter but is also scattered in gray matter throughout the whole brain. Expressed in myelinating cells of both ventral and dorsal restricted regions in newborn spinal cord. Expressed in non-myelin-forming as well as in myelin-forming Schwann cells in the sciatic nerve.

The protein localises to the endosome membrane. The protein resides in the lysosome membrane. Functionally, probable transporter, its natural substrate has not been found yet. May have a role in macrophage lipid metabolism and neural development. May play a role in myelination, perhaps as a transporter for certain kinds of myelin chemical components. May play an important role in gamma-secretase processing of APP and thus in amyloid-beta peptide generation. Regulates esterification of plasma membrane cholesterol by modulation of sphingolipid metabolism. Its function is as follows. Probable lipid transporter that modulates cholesterol sequestration in the late endosome/lysosome by regulating the intracellular sphingolipid metabolism, in turn participates in cholesterol homeostasis. May alter the transbilayer distribution of ceramide in the intraluminal membrane lipid bilayer, favoring its retention in the outer leaflet that results in increased acid ceramidase activity in the late endosome/lysosome, facilitating ceramide deacylation to sphingosine leading to the sequestration of free cholesterol in lysosomes. In addition regulates amyloid-beta production either by activating a signaling pathway that regulates amyloid precursor protein transcription through the modulation of sphingolipid metabolism or through its role in gamma-secretase processing of APP. May play a role in myelin formation. The protein is ATP-binding cassette sub-family A member 2 of Rattus norvegicus (Rat).